A 238-amino-acid polypeptide reads, in one-letter code: Ribonuclease PH (238 aa).

Phosphate contacts are provided by residues Arg86 and 124–126; that span reads GTR.

Belongs to the RNase PH family. As to quaternary structure, homohexameric ring arranged as a trimer of dimers.

It carries out the reaction tRNA(n+1) + phosphate = tRNA(n) + a ribonucleoside 5'-diphosphate. Functionally, phosphorolytic 3'-5' exoribonuclease that plays an important role in tRNA 3'-end maturation. Removes nucleotide residues following the 3'-CCA terminus of tRNAs; can also add nucleotides to the ends of RNA molecules by using nucleoside diphosphates as substrates, but this may not be physiologically important. Probably plays a role in initiation of 16S rRNA degradation (leading to ribosome degradation) during starvation. In Anaeromyxobacter sp. (strain Fw109-5), this protein is Ribonuclease PH.